Consider the following 366-residue polypeptide: UPF0324 membrane protein RSc1111 (366 aa).

Transmembrane regions (helical) follow at residues 21–43, 103–125, 137–159, 169–191, 198–220, 240–262, 283–305, and 343–365; these read LAGA…TAWA, LGAS…GAWV, AVLV…APAV, AIAS…YALA, VAPA…VIAA, VLAL…LVLE, WFAA…ATWH, and AGVL…RWLA.

The protein belongs to the UPF0324 family.

It localises to the cell membrane. In Ralstonia nicotianae (strain ATCC BAA-1114 / GMI1000) (Ralstonia solanacearum), this protein is UPF0324 membrane protein RSc1111.